The primary structure comprises 258 residues: Synaptosomal-associated protein 29 (258 aa).

Residues 1–41 (MSAYPKSYNPFDDDGEDEGARPAPWRDARDLPDGPDAPADR) form a disordered region. Basic and acidic residues predominate over residues 18–32 (EGARPAPWRDARDLP). A coiled-coil region spans residues 76 to 107 (ASSEELARQRGVLERTEKMVDKMDQDLKISQK). 3 positions are modified to phosphoserine: Ser-77, Ser-78, and Ser-114. Phosphothreonine occurs at positions 130 and 137. The interval 150-191 (ISTSKEQEAKYQASHPNLRKLDDTDPVPRGAGSAMSTDAYPK) is disordered. A phosphoserine mark is found at Ser-163, Ser-182, Ser-185, Ser-204, and Ser-210. The 63-residue stretch at 196–258 (RAYHQKIDSN…KSTERKVRQL (63 aa)) folds into the t-SNARE coiled-coil homology domain.

Belongs to the SNAP-25 family. Forms a SNARE complex, composed of VAMP8, SNAP29 and STX17, involved in fusion of autophagosome with lysosome. Interacts with multiple syntaxins including STX6. Interacts with EIPR1. Interacts with STX17; this interaction is increased in the absence of TMEM39A. As to quaternary structure, (Microbial infection) Interacts with Hantaan hantavirus nucleoprotein; this interaction prevents the breakdown of the viral glycoprotein N by virus-triggered autophagy. In terms of assembly, (Microbial infection) The interaction with STX17 is decreased in presence of SARS coronavirus-2/SARS-CoV-2 ORF3A protein. As to expression, found in brain, heart, kidney, liver, lung, placenta, skeletal muscle, spleen and pancreas.

It localises to the cytoplasm. It is found in the golgi apparatus membrane. Its subcellular location is the cytoplasmic vesicle. The protein localises to the autophagosome membrane. The protein resides in the cell projection. It localises to the cilium membrane. Its function is as follows. SNAREs, soluble N-ethylmaleimide-sensitive factor-attachment protein receptors, are essential proteins for fusion of cellular membranes. SNAREs localized on opposing membranes assemble to form a trans-SNARE complex, an extended, parallel four alpha-helical bundle that drives membrane fusion. SNAP29 is a SNARE involved in autophagy through the direct control of autophagosome membrane fusion with the lysososome membrane. Also plays a role in ciliogenesis by regulating membrane fusions. The polypeptide is Synaptosomal-associated protein 29 (Homo sapiens (Human)).